Here is a 359-residue protein sequence, read N- to C-terminus: tRNA-specific 2-thiouridylase MnmA (359 aa).

ATP contacts are provided by residues 6–13 and Leu-32; that span reads AMSGGVDS. The Nucleophile role is filled by Cys-97. Residues Cys-97 and Cys-195 are joined by a disulfide bond. Residue Gly-121 participates in ATP binding. Positions 144-146 are interaction with tRNA; that stretch reads KDQ. Catalysis depends on Cys-195, which acts as the Cysteine persulfide intermediate.

The protein belongs to the MnmA/TRMU family.

The protein resides in the cytoplasm. It carries out the reaction S-sulfanyl-L-cysteinyl-[protein] + uridine(34) in tRNA + AH2 + ATP = 2-thiouridine(34) in tRNA + L-cysteinyl-[protein] + A + AMP + diphosphate + H(+). Functionally, catalyzes the 2-thiolation of uridine at the wobble position (U34) of tRNA, leading to the formation of s(2)U34. This chain is tRNA-specific 2-thiouridylase MnmA, found in Tropheryma whipplei (strain TW08/27) (Whipple's bacillus).